A 370-amino-acid polypeptide reads, in one-letter code: F-box protein At1g66490 (370 aa).

The F-box domain maps to 1 to 46 (MRTISDLPVALVEEILSRVPLTSLSAVRSTCKTWNALSKTQIFGKT).

The sequence is that of F-box protein At1g66490 from Arabidopsis thaliana (Mouse-ear cress).